The chain runs to 336 residues: L-rhamnono-gamma-lactonase (336 aa).

It belongs to the metallo-dependent hydrolases superfamily. A divalent metal cation is required as a cofactor.

It catalyses the reaction L-rhamnono-1,4-lactone + H2O = L-rhamnonate + H(+). Inhibited by Zn(2+), Fe(2+) and Cu(2+), but not by EDTA. Hydrolase with high substrate specificity for L-rhamnono-1,4-lactone. Catalyzes the second step in an alternative pathway for rhamnose utilization that does not involve phosphorylated intermediates. In Scheffersomyces stipitis (strain ATCC 58785 / CBS 6054 / NBRC 10063 / NRRL Y-11545) (Yeast), this protein is L-rhamnono-gamma-lactonase (LRA2).